Here is a 96-residue protein sequence, read N- to C-terminus: Putative pterin-4-alpha-carbinolamine dehydratase (96 aa).

The protein belongs to the pterin-4-alpha-carbinolamine dehydratase family.

It carries out the reaction (4aS,6R)-4a-hydroxy-L-erythro-5,6,7,8-tetrahydrobiopterin = (6R)-L-erythro-6,7-dihydrobiopterin + H2O. This Paraburkholderia phytofirmans (strain DSM 17436 / LMG 22146 / PsJN) (Burkholderia phytofirmans) protein is Putative pterin-4-alpha-carbinolamine dehydratase.